The sequence spans 154 residues: Urease accessory protein UreE (154 aa).

It belongs to the UreE family.

The protein resides in the cytoplasm. In terms of biological role, involved in urease metallocenter assembly. Binds nickel. Probably functions as a nickel donor during metallocenter assembly. The chain is Urease accessory protein UreE from Escherichia coli O157:H7.